Reading from the N-terminus, the 356-residue chain is 7,8-didemethyl-8-hydroxy-5-deazariboflavin synthase (356 aa).

The Radical SAM core domain maps to 40–280 (ITYSKNVFIP…KDISIQVPPN (241 aa)). [4Fe-4S] cluster-binding residues include Cys54, Cys58, and Cys61.

The protein belongs to the radical SAM superfamily. CofG family. As to quaternary structure, consists of two subunits, CofG and CofH. [4Fe-4S] cluster is required as a cofactor.

The catalysed reaction is 5-amino-5-(4-hydroxybenzyl)-6-(D-ribitylimino)-5,6-dihydrouracil + S-adenosyl-L-methionine = 7,8-didemethyl-8-hydroxy-5-deazariboflavin + 5'-deoxyadenosine + L-methionine + NH4(+) + H(+). It participates in cofactor biosynthesis; coenzyme F0 biosynthesis. In terms of biological role, catalyzes the radical-mediated synthesis of 7,8-didemethyl-8-hydroxy-5-deazariboflavin from 5-amino-5-(4-hydroxybenzyl)-6-(D-ribitylimino)-5,6-dihydrouracil. The sequence is that of 7,8-didemethyl-8-hydroxy-5-deazariboflavin synthase from Methanococcus aeolicus (strain ATCC BAA-1280 / DSM 17508 / OCM 812 / Nankai-3).